The chain runs to 197 residues: Small ribosomal subunit protein uS4B (197 aa).

The S4 RNA-binding domain maps to 88 to 151 (CRLDNIAYRI…RKNDEFADNF (64 aa)).

This sequence belongs to the universal ribosomal protein uS4 family. As to quaternary structure, part of the 30S ribosomal subunit. Contacts protein S5. The interaction surface between S4 and S5 is involved in control of translational fidelity.

In terms of biological role, one of the primary rRNA binding proteins, it binds directly to 16S rRNA where it nucleates assembly of the body of the 30S subunit. Functionally, with S5 and S12 plays an important role in translational accuracy. This chain is Small ribosomal subunit protein uS4B, found in Clostridium botulinum (strain Langeland / NCTC 10281 / Type F).